Reading from the N-terminus, the 390-residue chain is 8-amino-7-oxononanoate synthase (390 aa).

Arg19 lines the substrate pocket. 106–107 (GY) provides a ligand contact to pyridoxal 5'-phosphate. His131 contributes to the substrate binding site. Residues Ser176, His204, and Thr233 each coordinate pyridoxal 5'-phosphate. Lys236 carries the post-translational modification N6-(pyridoxal phosphate)lysine. Thr350 contacts substrate.

It belongs to the class-II pyridoxal-phosphate-dependent aminotransferase family. BioF subfamily. In terms of assembly, homodimer. The cofactor is pyridoxal 5'-phosphate.

It carries out the reaction 6-carboxyhexanoyl-[ACP] + L-alanine + H(+) = (8S)-8-amino-7-oxononanoate + holo-[ACP] + CO2. It participates in cofactor biosynthesis; biotin biosynthesis. Catalyzes the decarboxylative condensation of pimeloyl-[acyl-carrier protein] and L-alanine to produce 8-amino-7-oxononanoate (AON), [acyl-carrier protein], and carbon dioxide. In Pseudomonas putida (strain ATCC 47054 / DSM 6125 / CFBP 8728 / NCIMB 11950 / KT2440), this protein is 8-amino-7-oxononanoate synthase.